A 760-amino-acid chain; its full sequence is Elongation factor G, mitochondrial (760 aa).

A mitochondrion-targeting transit peptide spans 1–37; it reads MIRGMLPRGLRALRPSVSPTVVSSSLHRNFHSSIRRF. The tr-type G domain occupies 68–349; the sequence is SRLRNIGVSA…AVVDYLPQPN (282 aa). GTP-binding positions include 77 to 84, 148 to 152, and 202 to 205; these read AHIDSGKT, DTPGH, and NKMD.

Belongs to the TRAFAC class translation factor GTPase superfamily. Classic translation factor GTPase family. EF-G/EF-2 subfamily.

Its subcellular location is the mitochondrion. It participates in protein biosynthesis; polypeptide chain elongation. Functionally, mitochondrial GTPase that catalyzes the GTP-dependent ribosomal translocation step during translation elongation. During this step, the ribosome changes from the pre-translocational (PRE) to the post-translocational (POST) state as the newly formed A-site-bound peptidyl-tRNA and P-site-bound deacylated tRNA move to the P and E sites, respectively. Catalyzes the coordinated movement of the two tRNA molecules, the mRNA and conformational changes in the ribosome. In Meyerozyma guilliermondii (strain ATCC 6260 / CBS 566 / DSM 6381 / JCM 1539 / NBRC 10279 / NRRL Y-324) (Yeast), this protein is Elongation factor G, mitochondrial.